We begin with the raw amino-acid sequence, 262 residues long: Nitrilase (262 aa).

One can recognise a CN hydrolase domain in the interval Val-2–Leu-237. Catalysis depends on Glu-42, which acts as the Proton acceptor. Catalysis depends on Lys-113, which acts as the Proton donor. Cys-146 acts as the Nucleophile in catalysis. Residue Val-173–Met-174 participates in substrate binding.

It belongs to the carbon-nitrogen hydrolase superfamily. In terms of assembly, homodimer.

It carries out the reaction a nitrile + 2 H2O = a carboxylate + NH4(+). With respect to regulation, enzymatic activity is inhibited in the presence of acetone, methanol and metal ions such as Ag(2+) and Hg(2+). Is also inhibited by various thiol reagents such as DTNB, p-chloromercuribenzoate, p-hydroxymercuribenzoate, iodacetamide and iodacetate. EDTA has no influence on activity. In terms of biological role, nitrilase that hydrolyzes preferentially aliphatic nitriles like malononitrile and fumaronitrile in vitro. These dinitriles are converted to the corresponding monoacid mononitriles, showing the enzyme is regioselective. Cannot hydrolyze compounds with a nitrile group bound to an aromatic ring or amino acid. Its biological role is unknown. The protein is Nitrilase of Pyrococcus abyssi (strain GE5 / Orsay).